A 164-amino-acid polypeptide reads, in one-letter code: MKRAVYAGSFDPVTNGHLWMIREAVELFDELIVAVGVNPDKHCTFSVDERVALLREVTSGFSKLRVDVFENQFLVNYAQSVGANYIVRGIRTASDYEYERTMRYINSDLHPDITTLFLLPPREYAEVSSTMVKGLIGPRGWEGVIRQYLPEPVYRKMLSMYSEQ.

Serine 9 is a binding site for substrate. ATP-binding positions include 9 to 10 and histidine 17; that span reads SF. Substrate-binding residues include lysine 41, leucine 74, and arginine 88. ATP contacts are provided by residues 89 to 91, glutamate 99, and 124 to 130; these read GIR and YAEVSST.

Belongs to the bacterial CoaD family. In terms of assembly, homohexamer. It depends on Mg(2+) as a cofactor.

The protein localises to the cytoplasm. The catalysed reaction is (R)-4'-phosphopantetheine + ATP + H(+) = 3'-dephospho-CoA + diphosphate. Its pathway is cofactor biosynthesis; coenzyme A biosynthesis; CoA from (R)-pantothenate: step 4/5. Functionally, reversibly transfers an adenylyl group from ATP to 4'-phosphopantetheine, yielding dephospho-CoA (dPCoA) and pyrophosphate. The polypeptide is Phosphopantetheine adenylyltransferase (Chromobacterium violaceum (strain ATCC 12472 / DSM 30191 / JCM 1249 / CCUG 213 / NBRC 12614 / NCIMB 9131 / NCTC 9757 / MK)).